Reading from the N-terminus, the 96-residue chain is Cytochrome oxidase assembly factor 4 (96 aa).

The region spanning 36-77 is the CHCH domain; it reads KTGCYVENLALQLCHAETGDWRQCFNEMALFRKCWEKNGNRE. 2 short sequence motifs (cx9C motif) span residues 39-49 and 59-69; these read CYVENLALQLC and CFNEMALFRKC. Disulfide bonds link cysteine 39–cysteine 69 and cysteine 49–cysteine 59.

The protein belongs to the COA4 family.

It localises to the mitochondrion inner membrane. It is found in the mitochondrion intermembrane space. Involved in cytochrome c oxidase assembly or stability. This is Cytochrome oxidase assembly factor 4 (COA4) from Saccharomyces cerevisiae (strain ATCC 204508 / S288c) (Baker's yeast).